Reading from the N-terminus, the 404-residue chain is Probable glucan endo-1,6-beta-glucosidase B (404 aa).

The signal sequence occupies residues 1–20; it reads MTTYQTLFLIPLAISTLVTA. N-linked (GlcNAc...) asparagine glycans are attached at residues asparagine 33 and asparagine 130. Glutamate 222 serves as the catalytic Proton donor. Asparagine 253 and asparagine 299 each carry an N-linked (GlcNAc...) asparagine glycan. Glutamate 324 acts as the Nucleophile in catalysis.

Belongs to the glycosyl hydrolase 5 (cellulase A) family.

Its subcellular location is the secreted. The catalysed reaction is Random hydrolysis of (1-&gt;6)-linkages in (1-&gt;6)-beta-D-glucans.. Its function is as follows. Beta-glucanases participate in the metabolism of beta-glucan, the main structural component of the cell wall. Acts on lutean, pustulan and 1,6-oligo-beta-D-glucosides. This is Probable glucan endo-1,6-beta-glucosidase B (exgB) from Aspergillus terreus (strain NIH 2624 / FGSC A1156).